Here is a 395-residue protein sequence, read N- to C-terminus: Leucine aminopeptidase 1 (395 aa).

Positions 1–19 (MKHLSLLALAAVAPTTALA) are cleaved as a signal peptide. The propeptide occupies 20–95 (GVIDHQQVTF…SVKSFEQTKV (76 aa)). Residue asparagine 187 is glycosylated (N-linked (GlcNAc...) asparagine). Zn(2+)-binding residues include histidine 195, aspartate 214, glutamate 253, and aspartate 280. Cysteine 329 and cysteine 333 are disulfide-bonded. Histidine 362 contacts Zn(2+).

It belongs to the peptidase M28 family. M28E subfamily. Monomer. Zn(2+) serves as cofactor.

It localises to the secreted. Extracellular aminopeptidase that allows assimilation of proteinaceous substrates. The polypeptide is Leucine aminopeptidase 1 (LAP1) (Uncinocarpus reesii (strain UAMH 1704)).